The primary structure comprises 239 residues: Uridylate kinase (239 aa).

Position 12–15 (12–15 (KLSG)) interacts with ATP. An involved in allosteric activation by GTP region spans residues 20 to 25 (GDQGYG). Gly-54 contacts UMP. Residues Gly-55 and Arg-59 each contribute to the ATP site. Residues Asp-74 and 135-142 (TGNPYFTT) each bind UMP. ATP contacts are provided by Thr-162, Tyr-168, and Asp-171.

The protein belongs to the UMP kinase family. As to quaternary structure, homohexamer.

The protein resides in the cytoplasm. It carries out the reaction UMP + ATP = UDP + ADP. It participates in pyrimidine metabolism; CTP biosynthesis via de novo pathway; UDP from UMP (UMPK route): step 1/1. Allosterically activated by GTP. Inhibited by UTP. Functionally, catalyzes the reversible phosphorylation of UMP to UDP. In Geobacter metallireducens (strain ATCC 53774 / DSM 7210 / GS-15), this protein is Uridylate kinase.